A 165-amino-acid chain; its full sequence is Phosphopantetheine adenylyltransferase (165 aa).

Threonine 9 provides a ligand contact to substrate. ATP-binding positions include 9-10 (TF) and histidine 17. 3 residues coordinate substrate: lysine 41, leucine 78, and arginine 92. ATP-binding positions include 93 to 95 (GLR), glutamate 103, and 128 to 134 (RQAIASK).

It belongs to the bacterial CoaD family. As to quaternary structure, homohexamer. It depends on Mg(2+) as a cofactor.

Its subcellular location is the cytoplasm. The enzyme catalyses (R)-4'-phosphopantetheine + ATP + H(+) = 3'-dephospho-CoA + diphosphate. Its pathway is cofactor biosynthesis; coenzyme A biosynthesis; CoA from (R)-pantothenate: step 4/5. Its function is as follows. Reversibly transfers an adenylyl group from ATP to 4'-phosphopantetheine, yielding dephospho-CoA (dPCoA) and pyrophosphate. In Ruegeria pomeroyi (strain ATCC 700808 / DSM 15171 / DSS-3) (Silicibacter pomeroyi), this protein is Phosphopantetheine adenylyltransferase.